Here is a 208-residue protein sequence, read N- to C-terminus: Protein-L-isoaspartate O-methyltransferase (208 aa).

Residue Ser-59 is part of the active site.

The protein belongs to the methyltransferase superfamily. L-isoaspartyl/D-aspartyl protein methyltransferase family.

Its subcellular location is the cytoplasm. It catalyses the reaction [protein]-L-isoaspartate + S-adenosyl-L-methionine = [protein]-L-isoaspartate alpha-methyl ester + S-adenosyl-L-homocysteine. Its function is as follows. Catalyzes the methyl esterification of L-isoaspartyl residues in peptides and proteins that result from spontaneous decomposition of normal L-aspartyl and L-asparaginyl residues. It plays a role in the repair and/or degradation of damaged proteins. The chain is Protein-L-isoaspartate O-methyltransferase from Vibrio vulnificus (strain CMCP6).